We begin with the raw amino-acid sequence, 352 residues long: Methylthioribose-1-phosphate isomerase (352 aa).

Residues 49–51, R93, and Q202 contribute to the substrate site; that span reads RGA. D243 functions as the Proton donor in the catalytic mechanism. 253–254 provides a ligand contact to substrate; sequence NK.

This sequence belongs to the eIF-2B alpha/beta/delta subunits family. MtnA subfamily.

The catalysed reaction is 5-(methylsulfanyl)-alpha-D-ribose 1-phosphate = 5-(methylsulfanyl)-D-ribulose 1-phosphate. It functions in the pathway amino-acid biosynthesis; L-methionine biosynthesis via salvage pathway; L-methionine from S-methyl-5-thio-alpha-D-ribose 1-phosphate: step 1/6. Its function is as follows. Catalyzes the interconversion of methylthioribose-1-phosphate (MTR-1-P) into methylthioribulose-1-phosphate (MTRu-1-P). The protein is Methylthioribose-1-phosphate isomerase of Magnetococcus marinus (strain ATCC BAA-1437 / JCM 17883 / MC-1).